The primary structure comprises 657 residues: Endoplasmic reticulum chaperone BiP homolog (657 aa).

Residues Met1–Cys17 form the signal peptide. ATP contacts are provided by residues Gly38–Tyr41, Lys99, Gly229–Thr231, Glu295–Ser302, and Gly366–Arg369. The interval Lys128 to Lys282 is nucleotide-binding (NBD). The substrate-binding (SBD) stretch occupies residues Val402 to Thr502. Residues Leu607–Leu657 form a disordered region. Residues Glu616–Glu626 show a composition bias toward basic and acidic residues. The segment covering Ala646 to Leu657 has biased composition (acidic residues). The Prevents secretion from ER signature appears at His654–Leu657.

The protein belongs to the heat shock protein 70 family.

It localises to the endoplasmic reticulum lumen. The catalysed reaction is ATP + H2O = ADP + phosphate + H(+). The chaperone activity is regulated by ATP-induced allosteric coupling of the nucleotide-binding (NBD) and substrate-binding (SBD) domains. In the ADP-bound and nucleotide-free (apo) states, the two domains have little interaction. In contrast, in the ATP-bound state the two domains are tightly coupled, which results in drastically accelerated kinetics in both binding and release of polypeptide substrates. J domain-containing co-chaperones stimulate the ATPase activity and are required for efficient substrate recognition. Its function is as follows. Endoplasmic reticulum chaperone that plays a key role in protein folding and quality control in the endoplasmic reticulum lumen. Required for ER dynamics during the first embryonic cell divisions. Specifically, controls ER transition into sheet-like structures at the onset of mitosis, possibly by regulating homotypic membrane fusion. In Caenorhabditis elegans, this protein is Endoplasmic reticulum chaperone BiP homolog (hsp-4).